The sequence spans 487 residues: Cytochrome P450 2C21 (487 aa).

Residue Cys-432 coordinates heme.

It belongs to the cytochrome P450 family. Requires heme as cofactor. In terms of tissue distribution, liver.

The protein localises to the endoplasmic reticulum membrane. It localises to the microsome membrane. It catalyses the reaction an organic molecule + reduced [NADPH--hemoprotein reductase] + O2 = an alcohol + oxidized [NADPH--hemoprotein reductase] + H2O + H(+). Cytochromes P450 are a group of heme-thiolate monooxygenases. In liver microsomes, this enzyme is involved in an NADPH-dependent electron transport pathway. It oxidizes a variety of structurally unrelated compounds, including steroids, fatty acids, and xenobiotics. Showed testosterone hydrolase activity. The sequence is that of Cytochrome P450 2C21 (CYP2C21) from Canis lupus familiaris (Dog).